A 469-amino-acid polypeptide reads, in one-letter code: GTPase Der (469 aa).

EngA-type G domains follow at residues 3-166 (PVIA…PEDE) and 177-350 (LRLA…ESAN). GTP is bound by residues 9-16 (GRPNVGKS), 56-60 (DTGGI), 118-121 (NKVD), 183-190 (GRPNVGKS), 230-234 (DTAGV), and 295-298 (NKWD). In terms of domain architecture, KH-like spans 351–435 (LKVSPAKLTQ…PVKIEFKTSE (85 aa)).

The protein belongs to the TRAFAC class TrmE-Era-EngA-EngB-Septin-like GTPase superfamily. EngA (Der) GTPase family. Associates with the 50S ribosomal subunit.

In terms of biological role, GTPase that plays an essential role in the late steps of ribosome biogenesis. In Acinetobacter baumannii (strain SDF), this protein is GTPase Der.